A 363-amino-acid chain; its full sequence is Aminomethyltransferase (363 aa).

This sequence belongs to the GcvT family. In terms of assembly, the glycine cleavage system is composed of four proteins: P, T, L and H.

The catalysed reaction is N(6)-[(R)-S(8)-aminomethyldihydrolipoyl]-L-lysyl-[protein] + (6S)-5,6,7,8-tetrahydrofolate = N(6)-[(R)-dihydrolipoyl]-L-lysyl-[protein] + (6R)-5,10-methylene-5,6,7,8-tetrahydrofolate + NH4(+). Functionally, the glycine cleavage system catalyzes the degradation of glycine. The chain is Aminomethyltransferase from Staphylococcus aureus (strain bovine RF122 / ET3-1).